We begin with the raw amino-acid sequence, 363 residues long: UDP-N-acetylglucosamine--N-acetylmuramyl-(pentapeptide) pyrophosphoryl-undecaprenol N-acetylglucosamine transferase (363 aa).

UDP-N-acetyl-alpha-D-glucosamine contacts are provided by residues 14–16 (TGG), Asn122, Arg163, Ser190, and Gln285.

The protein belongs to the glycosyltransferase 28 family. MurG subfamily.

It is found in the cell inner membrane. It carries out the reaction di-trans,octa-cis-undecaprenyl diphospho-N-acetyl-alpha-D-muramoyl-L-alanyl-D-glutamyl-meso-2,6-diaminopimeloyl-D-alanyl-D-alanine + UDP-N-acetyl-alpha-D-glucosamine = di-trans,octa-cis-undecaprenyl diphospho-[N-acetyl-alpha-D-glucosaminyl-(1-&gt;4)]-N-acetyl-alpha-D-muramoyl-L-alanyl-D-glutamyl-meso-2,6-diaminopimeloyl-D-alanyl-D-alanine + UDP + H(+). It functions in the pathway cell wall biogenesis; peptidoglycan biosynthesis. Its function is as follows. Cell wall formation. Catalyzes the transfer of a GlcNAc subunit on undecaprenyl-pyrophosphoryl-MurNAc-pentapeptide (lipid intermediate I) to form undecaprenyl-pyrophosphoryl-MurNAc-(pentapeptide)GlcNAc (lipid intermediate II). In Prochlorococcus marinus (strain MIT 9312), this protein is UDP-N-acetylglucosamine--N-acetylmuramyl-(pentapeptide) pyrophosphoryl-undecaprenol N-acetylglucosamine transferase.